Consider the following 74-residue polypeptide: Putative membrane protein insertion efficiency factor (74 aa).

It belongs to the UPF0161 family.

The protein localises to the cell membrane. In terms of biological role, could be involved in insertion of integral membrane proteins into the membrane. This chain is Putative membrane protein insertion efficiency factor, found in Bacillus pumilus (strain SAFR-032).